We begin with the raw amino-acid sequence, 558 residues long: MSFKTDAETAQSSTMRPIGEIAAKLGLNVDNIEPYGHYKAKINPAEAFKLPQKQGRLILVTAINPTPAGEGKTTVTIGLADALRHIGKDSVIALREPSLGPVFGVKGGAAGGGYAQVLPMEDINLHFTGDFHAIGAANNLLAAMLDNHIYQGNELNIDPKRVLWRRVVDMNDRQLRNIIDGMGKPVDGVMRPDGFDITVASEVMAVFCLAKDISDLKERFGNILVAYAKDGSPVYAKDLKAHGAMAALLKDAIKPNLVQTIEGTPAFVHGGPFANIAHGCNSVTATRLAKHLADYAVTEAGFGADLGAEKFCDIKCRLAGLKPDAAVVVATVRALKYNGGVERANLGEENLEALAKGLPNLLKHISNLKNVFGLPVVVALNRFVSDSDAELAMIEKACAEHGVEVSLTEVWGKGGAGGADLARKVVNAIDNQPNNFGFAYDVELGIKDKIRAIAQKVYGAEDVDFSAEASAEIASLEKLGLDKMPICMAKTQYSLSDNAKLLGCPEGFRITVRGITVSAGAGFIVALCGNMMKMPGLPKVPAAEKIDVDEHGVIHGLF.

66-73 (TPAGEGKT) is a binding site for ATP.

This sequence belongs to the formate--tetrahydrofolate ligase family.

It carries out the reaction (6S)-5,6,7,8-tetrahydrofolate + formate + ATP = (6R)-10-formyltetrahydrofolate + ADP + phosphate. It participates in one-carbon metabolism; tetrahydrofolate interconversion. This Neisseria gonorrhoeae (strain NCCP11945) protein is Formate--tetrahydrofolate ligase.